The primary structure comprises 639 residues: Serine protease HtrA-like (639 aa).

Composition is skewed to basic and acidic residues over residues 1–13 (MDNDKKHVIPREQ), 21–75 (YFHN…EIHQ), 106–187 (QQLK…KESS), and 195–205 (KSQKIEQKEQK). The tract at residues 1 to 262 (MDNDKKHVIP…LENEPKNNDT (262 aa)) is disordered. Over residues 206-219 (ASSNETSNKELNSY) the composition is skewed to polar residues. 2 stretches are compositionally biased toward basic and acidic residues: residues 220 to 235 (TKDKNNKVEDNQDLKK) and 245 to 262 (NKLEENEHLENEPKNNDT). The chain crosses the membrane as a helical span at residues 277–297 (IVIVVAIILIVILISAIISTM). Residues H374, D404, and S489 each act as charge relay system in the active site. In terms of domain architecture, PDZ spans 527-629 (EIAEELEKKG…TLSAKIYREG (103 aa)).

The protein belongs to the peptidase S1C family.

The protein resides in the cell membrane. The polypeptide is Serine protease HtrA-like (Staphylococcus haemolyticus (strain JCSC1435)).